Here is a 320-residue protein sequence, read N- to C-terminus: Lipoyl synthase (320 aa).

Residues cysteine 67, cysteine 72, cysteine 78, cysteine 93, cysteine 97, cysteine 100, and serine 307 each coordinate [4Fe-4S] cluster. The 218-residue stretch at 79-296 (FNHGTATFMI…RDKANEMGFE (218 aa)) folds into the Radical SAM core domain.

It belongs to the radical SAM superfamily. Lipoyl synthase family. The cofactor is [4Fe-4S] cluster.

It localises to the cytoplasm. The catalysed reaction is [[Fe-S] cluster scaffold protein carrying a second [4Fe-4S](2+) cluster] + N(6)-octanoyl-L-lysyl-[protein] + 2 oxidized [2Fe-2S]-[ferredoxin] + 2 S-adenosyl-L-methionine + 4 H(+) = [[Fe-S] cluster scaffold protein] + N(6)-[(R)-dihydrolipoyl]-L-lysyl-[protein] + 4 Fe(3+) + 2 hydrogen sulfide + 2 5'-deoxyadenosine + 2 L-methionine + 2 reduced [2Fe-2S]-[ferredoxin]. It functions in the pathway protein modification; protein lipoylation via endogenous pathway; protein N(6)-(lipoyl)lysine from octanoyl-[acyl-carrier-protein]: step 2/2. Its function is as follows. Catalyzes the radical-mediated insertion of two sulfur atoms into the C-6 and C-8 positions of the octanoyl moiety bound to the lipoyl domains of lipoate-dependent enzymes, thereby converting the octanoylated domains into lipoylated derivatives. The polypeptide is Lipoyl synthase (Haemophilus influenzae (strain ATCC 51907 / DSM 11121 / KW20 / Rd)).